We begin with the raw amino-acid sequence, 143 residues long: Brain ribonuclease (143 aa).

The tract at residues 1–21 (KESAAAKFRRQHMDSGSSSSG) is disordered. Positions 7 and 10 each coordinate substrate. Catalysis depends on histidine 12, which acts as the Proton acceptor. 4 disulfides stabilise this stretch: cysteine 26-cysteine 84, cysteine 40-cysteine 95, cysteine 58-cysteine 110, and cysteine 65-cysteine 72. Substrate is bound at residue 41-45 (KPVNT). Asparagine 62 is a glycosylation site (N-linked (GlcNAc...) asparagine). Substrate is bound by residues lysine 66 and arginine 85. Histidine 119 (proton donor) is an active-site residue. An O-linked (GalNAc...) threonine glycan is attached at threonine 129. O-linked (GalNAc...) serine glycosylation occurs at serine 133.

The protein belongs to the pancreatic ribonuclease family.

It is found in the secreted. This chain is Brain ribonuclease (BRN), found in Ovis aries (Sheep).